Here is a 218-residue protein sequence, read N- to C-terminus: Probable transaldolase (218 aa).

The active-site Schiff-base intermediate with substrate is K84.

This sequence belongs to the transaldolase family. Type 3B subfamily.

It localises to the cytoplasm. The catalysed reaction is D-sedoheptulose 7-phosphate + D-glyceraldehyde 3-phosphate = D-erythrose 4-phosphate + beta-D-fructose 6-phosphate. It participates in carbohydrate degradation; pentose phosphate pathway; D-glyceraldehyde 3-phosphate and beta-D-fructose 6-phosphate from D-ribose 5-phosphate and D-xylulose 5-phosphate (non-oxidative stage): step 2/3. Transaldolase is important for the balance of metabolites in the pentose-phosphate pathway. This Sulfurihydrogenibium sp. (strain YO3AOP1) protein is Probable transaldolase.